The chain runs to 280 residues: Undecaprenyl-diphosphatase (280 aa).

Transmembrane regions (helical) follow at residues 3–23, 45–65, 88–108, 115–135, 150–170, 191–211, 225–245, and 255–275; these read IILL…EFLP, VDLF…YDYW, QLGL…FTFA, LFDP…IFYV, VGLK…IPGT, AEFS…LDLL, VLGI…RLLV, and IFAW…WGFG.

It belongs to the UppP family.

Its subcellular location is the cell inner membrane. The enzyme catalyses di-trans,octa-cis-undecaprenyl diphosphate + H2O = di-trans,octa-cis-undecaprenyl phosphate + phosphate + H(+). Its function is as follows. Catalyzes the dephosphorylation of undecaprenyl diphosphate (UPP). Confers resistance to bacitracin. The protein is Undecaprenyl-diphosphatase of Psychrobacter arcticus (strain DSM 17307 / VKM B-2377 / 273-4).